The following is a 302-amino-acid chain: Urease accessory protein UreD (302 aa).

This sequence belongs to the UreD family. As to quaternary structure, ureD, UreF and UreG form a complex that acts as a GTP-hydrolysis-dependent molecular chaperone, activating the urease apoprotein by helping to assemble the nickel containing metallocenter of UreC. The UreE protein probably delivers the nickel.

It is found in the cytoplasm. Functionally, required for maturation of urease via the functional incorporation of the urease nickel metallocenter. The sequence is that of Urease accessory protein UreD from Pseudoalteromonas translucida (strain TAC 125).